The sequence spans 110 residues: uncharacterized protein (110 aa).

The protein to M.jannaschii MJ0123 and A.aeolicus AA15.

This is an uncharacterized protein from Methanocaldococcus jannaschii (strain ATCC 43067 / DSM 2661 / JAL-1 / JCM 10045 / NBRC 100440) (Methanococcus jannaschii).